The chain runs to 334 residues: WD repeat-containing protein 54 (334 aa).

3 WD repeats span residues 162 to 206, 208 to 247, and 250 to 289; these read GHQM…TLLT, IPGF…LHVQ, and AHAR…ESGY.

In terms of assembly, homodimer and homotrimer; forms tight forms of dimers and trimers. Interacts with IZUMO1 and IZUMO1R/JUNO. Cross-linked to tightly form both dimers and trimers by TGM2. Cross-linking enhances the activation of EGF receptor-mediated signaling pathway. Cross-linking is inhibited by EGF. Post-translationally, ubiquitinated. EGF increases ubiquitination. Expressed in epithelial cells (at protein level). Isoform 3 expression is highly increased in colorectal cancer cells.

It localises to the vesicle. The protein localises to the cytoplasm. Its subcellular location is the cell membrane. Its function is as follows. Plays a role in the adhesion and fusion of the sperm-oocyte membrane through its interactions with IZUMO1 and IZUMO1R/JUNO. When cross-linked to form dimers and trimers, it has a regulatory effect on ERK signaling pathway activity in response to EGF stimulation. Colocalizes with the EGF receptor in WDR54-specific vesicle where it sustains the internalization and controls the degradation of the EGF receptor after EGF stimulation. The chain is WD repeat-containing protein 54 from Homo sapiens (Human).